Consider the following 206-residue polypeptide: MSYTLPSLPYAYDALEPHFDKQTMEIHHTKHHQTYVNNANAALESLPEFANLPVEELITKLDQLPADKKTVLRNNAGGHANHSLFWKGLKKGTTLQGDLKAAIERDFGSVDNFKAEFEKAAASRFGSGWAWLVLKGDKLAVVSTANQDSPLMGEAISGASGFPILGLDVWEHAYYLKFQNRRPDYIKEFWNVVNWDEAAARFAAKK.

Residues His-27, His-82, Asp-168, and His-172 each contribute to the Mn(2+) site.

Belongs to the iron/manganese superoxide dismutase family. In terms of assembly, homodimer. The cofactor is Mn(2+).

The enzyme catalyses 2 superoxide + 2 H(+) = H2O2 + O2. Its function is as follows. Destroys superoxide anion radicals which are normally produced within the cells and which are toxic to biological systems. This Escherichia coli O157:H7 protein is Superoxide dismutase [Mn] (sodA).